The chain runs to 202 residues: Peptidyl-tRNA hydrolase (202 aa).

TRNA is bound at residue Y14. H19 functions as the Proton acceptor in the catalytic mechanism. TRNA contacts are provided by Y64, N66, and N112.

This sequence belongs to the PTH family. Monomer.

The protein localises to the cytoplasm. The catalysed reaction is an N-acyl-L-alpha-aminoacyl-tRNA + H2O = an N-acyl-L-amino acid + a tRNA + H(+). In terms of biological role, hydrolyzes ribosome-free peptidyl-tRNAs (with 1 or more amino acids incorporated), which drop off the ribosome during protein synthesis, or as a result of ribosome stalling. Its function is as follows. Catalyzes the release of premature peptidyl moieties from peptidyl-tRNA molecules trapped in stalled 50S ribosomal subunits, and thus maintains levels of free tRNAs and 50S ribosomes. The polypeptide is Peptidyl-tRNA hydrolase (Xanthobacter autotrophicus (strain ATCC BAA-1158 / Py2)).